We begin with the raw amino-acid sequence, 263 residues long: MSFVDLEQGRHKIEQNGDFPALASSIAQEIHALRGNTAAIHRYLVNNLTKNLHEVLEQSRELSQKVRSDLVRLANIKDTKYGEEASSFALSKLTRDFNTVLAELQRVQQKCAQQESDSVAAAQAALNQDVGQHFIEEEERNVSLSNNSSGQRQPLTESKISNSQLEYQQRLINERQGEIENLTQGINELNEIFRDLSTIINEQGELVTNIEYNVGNTSTNTKNASRQLQIANEHSRKARKRSFCFLVILVVILGVILTALIMG.

Positions 140–159 are disordered; the sequence is RNVSLSNNSSGQRQPLTESK. Residues 142–159 show a composition bias toward polar residues; sequence VSLSNNSSGQRQPLTESK. Phosphoserine is present on residues Ser-148 and Ser-163. One can recognise a t-SNARE coiled-coil homology domain in the interval 169-231; it reads QRLINERQGE…KNASRQLQIA (63 aa).

Belongs to the syntaxin family.

Its subcellular location is the endoplasmic reticulum. Functionally, has a role in vesicle-mediated transport but not with protein transport from Golgi to vesicle. This chain is Syntaxin pep12 (pep12), found in Schizosaccharomyces pombe (strain 972 / ATCC 24843) (Fission yeast).